A 61-amino-acid chain; its full sequence is Small ribosomal subunit protein uS14 (61 aa).

Zn(2+)-binding residues include C24, C27, C40, and C43.

This sequence belongs to the universal ribosomal protein uS14 family. Zinc-binding uS14 subfamily. Part of the 30S ribosomal subunit. Contacts proteins S3 and S10. Requires Zn(2+) as cofactor.

Its function is as follows. Binds 16S rRNA, required for the assembly of 30S particles and may also be responsible for determining the conformation of the 16S rRNA at the A site. This Frankia casuarinae (strain DSM 45818 / CECT 9043 / HFP020203 / CcI3) protein is Small ribosomal subunit protein uS14.